The primary structure comprises 88 residues: Small ribosomal subunit protein uS15 (88 aa).

Belongs to the universal ribosomal protein uS15 family. As to quaternary structure, part of the 30S ribosomal subunit. Forms a bridge to the 50S subunit in the 70S ribosome, contacting the 23S rRNA.

Its function is as follows. One of the primary rRNA binding proteins, it binds directly to 16S rRNA where it helps nucleate assembly of the platform of the 30S subunit by binding and bridging several RNA helices of the 16S rRNA. In terms of biological role, forms an intersubunit bridge (bridge B4) with the 23S rRNA of the 50S subunit in the ribosome. The chain is Small ribosomal subunit protein uS15 from Mycoplasma mobile (strain ATCC 43663 / 163K / NCTC 11711) (Mesomycoplasma mobile).